The following is a 442-amino-acid chain: Glutamate--tRNA ligase 1 (442 aa).

The short motif at 9-19 (PSPTGKLHVGN) is the 'HIGH' region element. Positions 240 to 244 (KLSKR) match the 'KMSKS' region motif. Lys243 is a binding site for ATP.

It belongs to the class-I aminoacyl-tRNA synthetase family. Glutamate--tRNA ligase type 1 subfamily. As to quaternary structure, monomer.

The protein resides in the cytoplasm. The catalysed reaction is tRNA(Glu) + L-glutamate + ATP = L-glutamyl-tRNA(Glu) + AMP + diphosphate. Functionally, catalyzes the attachment of glutamate to tRNA(Glu) in a two-step reaction: glutamate is first activated by ATP to form Glu-AMP and then transferred to the acceptor end of tRNA(Glu). This is Glutamate--tRNA ligase 1 from Novosphingobium aromaticivorans (strain ATCC 700278 / DSM 12444 / CCUG 56034 / CIP 105152 / NBRC 16084 / F199).